The chain runs to 377 residues: N-acetyldiaminopimelate deacetylase (377 aa).

D70 is a catalytic residue. Catalysis depends on E129, which acts as the Proton acceptor.

It belongs to the peptidase M20A family. N-acetyldiaminopimelate deacetylase subfamily.

It catalyses the reaction N-acetyl-(2S,6S)-2,6-diaminopimelate + H2O = (2S,6S)-2,6-diaminopimelate + acetate. It participates in amino-acid biosynthesis; L-lysine biosynthesis via DAP pathway; LL-2,6-diaminopimelate from (S)-tetrahydrodipicolinate (acetylase route): step 3/3. In terms of biological role, catalyzes the conversion of N-acetyl-diaminopimelate to diaminopimelate and acetate. The chain is N-acetyldiaminopimelate deacetylase from Geobacillus thermodenitrificans (strain NG80-2).